The following is a 235-amino-acid chain: 1-(5-phosphoribosyl)-5-[(5-phosphoribosylamino)methylideneamino] imidazole-4-carboxamide isomerase (235 aa).

Catalysis depends on Asp-8, which acts as the Proton acceptor. The Proton donor role is filled by Asp-127.

Belongs to the HisA/HisF family.

It localises to the cytoplasm. It catalyses the reaction 1-(5-phospho-beta-D-ribosyl)-5-[(5-phospho-beta-D-ribosylamino)methylideneamino]imidazole-4-carboxamide = 5-[(5-phospho-1-deoxy-D-ribulos-1-ylimino)methylamino]-1-(5-phospho-beta-D-ribosyl)imidazole-4-carboxamide. The protein operates within amino-acid biosynthesis; L-histidine biosynthesis; L-histidine from 5-phospho-alpha-D-ribose 1-diphosphate: step 4/9. In Aliarcobacter butzleri (strain RM4018) (Arcobacter butzleri), this protein is 1-(5-phosphoribosyl)-5-[(5-phosphoribosylamino)methylideneamino] imidazole-4-carboxamide isomerase.